The chain runs to 134 residues: Transmembrane protein 100 (134 aa).

Residue S15 is modified to Phosphoserine. 2 helical membrane-spanning segments follow: residues 56-76 (CVIP…AVAY) and 84-104 (IISI…ASSA). S121 carries the phosphoserine modification.

Interacts (via C-terminus) with TRPA1 and TRPV1. Interacts with TASOR.

The protein resides in the cell membrane. The protein localises to the membrane. It localises to the perikaryon. It is found in the cytoplasm. Its subcellular location is the perinuclear region. The protein resides in the endoplasmic reticulum. Its function is as follows. Plays a role during embryonic arterial endothelium differentiation and vascular morphogenesis through the ACVRL1 receptor-dependent signaling pathway upon stimulation by bone morphogenetic proteins, such as GDF2/BMP9 and BMP10. Involved in the regulation of nociception, acting as a modulator of the interaction between TRPA1 and TRPV1, two molecular sensors and mediators of pain signals in dorsal root ganglia (DRG) neurons. Mechanistically, it weakens their interaction, thereby releasing the inhibition of TRPA1 by TRPV1 and increasing the single-channel open probability of the TRPA1-TRPV1 complex. The chain is Transmembrane protein 100 (TMEM100) from Bos taurus (Bovine).